Here is a 400-residue protein sequence, read N- to C-terminus: Enoyl-[acyl-carrier-protein] reductase [NADH] (400 aa).

NAD(+) is bound by residues 48-53 (GSSSGY), 74-75 (FE), 111-112 (DA), and 139-140 (LA). Tyr225 is a binding site for substrate. Catalysis depends on Tyr235, which acts as the Proton donor. NAD(+) contacts are provided by residues Lys244 and 273–275 (VVT).

Belongs to the TER reductase family. As to quaternary structure, monomer.

The catalysed reaction is a 2,3-saturated acyl-[ACP] + NAD(+) = a (2E)-enoyl-[ACP] + NADH + H(+). The protein operates within lipid metabolism; fatty acid biosynthesis. In terms of biological role, involved in the final reduction of the elongation cycle of fatty acid synthesis (FAS II). Catalyzes the reduction of a carbon-carbon double bond in an enoyl moiety that is covalently linked to an acyl carrier protein (ACP). The chain is Enoyl-[acyl-carrier-protein] reductase [NADH] from Shewanella denitrificans (strain OS217 / ATCC BAA-1090 / DSM 15013).